A 1027-amino-acid chain; its full sequence is C2 and GRAM domain-containing protein At5g50170 (1027 aa).

In terms of domain architecture, C2 1 spans Met-1–Phe-103. Residues Ser-158 to Asp-167 are compositionally biased toward basic and acidic residues. Disordered regions lie at residues Ser-158–Lys-177 and Leu-201–Ser-223. The span at Gly-168–Lys-177 shows a compositional bias: basic residues. A compositionally biased stretch (polar residues) spans Ser-206 to Ser-223. Residues Thr-253–Asp-426 form the VASt 1 domain. A helical transmembrane segment spans residues Phe-452–Val-472. The C2 2 domain occupies Thr-516–Val-639. Residues Ala-693–Val-756 form the GRAM domain. The 164-residue stretch at Met-855 to Ser-1018 folds into the VASt 2 domain.

It is found in the membrane. This Arabidopsis thaliana (Mouse-ear cress) protein is C2 and GRAM domain-containing protein At5g50170.